A 405-amino-acid polypeptide reads, in one-letter code: Tryptophan synthase beta chain (405 aa).

Lys95 is modified (N6-(pyridoxal phosphate)lysine).

The protein belongs to the TrpB family. As to quaternary structure, tetramer of two alpha and two beta chains. Requires pyridoxal 5'-phosphate as cofactor.

It carries out the reaction (1S,2R)-1-C-(indol-3-yl)glycerol 3-phosphate + L-serine = D-glyceraldehyde 3-phosphate + L-tryptophan + H2O. The protein operates within amino-acid biosynthesis; L-tryptophan biosynthesis; L-tryptophan from chorismate: step 5/5. Its function is as follows. The beta subunit is responsible for the synthesis of L-tryptophan from indole and L-serine. The protein is Tryptophan synthase beta chain (trpB) of Pseudomonas putida (Arthrobacter siderocapsulatus).